The sequence spans 87 residues: Large ribosomal subunit protein eL33 (87 aa).

Belongs to the eukaryotic ribosomal protein eL33 family.

In Pyrococcus woesei, this protein is Large ribosomal subunit protein eL33.